The following is a 207-amino-acid chain: Histidine biosynthesis bifunctional protein HisIE (207 aa).

Residues 1 to 117 (MSLVTTINWE…GKQEQPALVF (117 aa)) form a phosphoribosyl-AMP cyclohydrolase region. Residues 118 to 207 (LHQLEQVLAN…TEKLQERHNK (90 aa)) form a phosphoribosyl-ATP pyrophosphohydrolase region.

The protein in the N-terminal section; belongs to the PRA-CH family. This sequence in the C-terminal section; belongs to the PRA-PH family.

The protein localises to the cytoplasm. The enzyme catalyses 1-(5-phospho-beta-D-ribosyl)-ATP + H2O = 1-(5-phospho-beta-D-ribosyl)-5'-AMP + diphosphate + H(+). It carries out the reaction 1-(5-phospho-beta-D-ribosyl)-5'-AMP + H2O = 1-(5-phospho-beta-D-ribosyl)-5-[(5-phospho-beta-D-ribosylamino)methylideneamino]imidazole-4-carboxamide. The protein operates within amino-acid biosynthesis; L-histidine biosynthesis; L-histidine from 5-phospho-alpha-D-ribose 1-diphosphate: step 2/9. It participates in amino-acid biosynthesis; L-histidine biosynthesis; L-histidine from 5-phospho-alpha-D-ribose 1-diphosphate: step 3/9. This Photobacterium profundum (strain SS9) protein is Histidine biosynthesis bifunctional protein HisIE.